The following is a 223-amino-acid chain: UPF0173 metal-dependent hydrolase Amet_4625 (223 aa).

Belongs to the UPF0173 family.

In Alkaliphilus metalliredigens (strain QYMF), this protein is UPF0173 metal-dependent hydrolase Amet_4625.